The following is a 445-amino-acid chain: Tyrosine--tRNA ligase, mitochondrial (445 aa).

L-tyrosine is bound at residue Y33. D37 contributes to the ATP binding site. The short motif at 38-47 is the 'HIGH' region element; the sequence is PTAASLHVGN. L-tyrosine-binding residues include D77, Y184, Q188, D191, and Q210. Positions 245 to 249 match the 'KMSKS' region motif; sequence KLGKS. Residue K248 participates in ATP binding. One can recognise an S4 RNA-binding domain in the interval 384 to 445; it reads QPFSRLLRTL…GKRTFVLDSL (62 aa).

Belongs to the class-I aminoacyl-tRNA synthetase family. Homodimer.

Its subcellular location is the mitochondrion matrix. It carries out the reaction tRNA(Tyr) + L-tyrosine + ATP = L-tyrosyl-tRNA(Tyr) + AMP + diphosphate + H(+). In terms of biological role, catalyzes the attachment of tyrosine to tRNA(Tyr) in a two-step reaction: tyrosine is first activated by ATP to form Tyr-AMP and then transferred to the acceptor end of tRNA(Tyr). The polypeptide is Tyrosine--tRNA ligase, mitochondrial (Schizosaccharomyces pombe (strain 972 / ATCC 24843) (Fission yeast)).